The following is a 92-amino-acid chain: Small ribosomal subunit protein uS19 (92 aa).

The protein belongs to the universal ribosomal protein uS19 family.

Protein S19 forms a complex with S13 that binds strongly to the 16S ribosomal RNA. The protein is Small ribosomal subunit protein uS19 of Anoxybacillus flavithermus (strain DSM 21510 / WK1).